The sequence spans 93 residues: Small ribosomal subunit protein bS6 (93 aa).

This sequence belongs to the bacterial ribosomal protein bS6 family.

In terms of biological role, binds together with bS18 to 16S ribosomal RNA. In Phytoplasma australiense, this protein is Small ribosomal subunit protein bS6.